The chain runs to 76 residues: VpAmp1.0 (76 aa).

An N-terminal signal peptide occupies residues 1–22 (MKLINLVPVFFVLIIVVDYCHS). Isoleucine amide is present on Ile41. A propeptide spanning residues 42-76 (GKRSVESQRYVDLNRRDLEQDLQELQDFLDQISEH) is cleaved from the precursor.

Belongs to the non-disulfide-bridged peptide (NDBP) superfamily. Short antimicrobial peptide (group 4) family. In terms of tissue distribution, expressed by the venom gland.

The protein localises to the secreted. It localises to the target cell membrane. In terms of biological role, antimicrobial peptide with potent activity against Gram-positive bacteria S.aureus (MIC=2.5 uM) and S.agalactiaea (MIC=2.5 uM), and Gram-negative bacteria E.coli (MIC=24 uM) and P.aeruginosa (MIC=2.5 uM), as well as against yeasts Candida albicans (MIC=6.25 uM) and C.glabrata (MIC&gt;50 uM). Also elicits high hemolysis on human erythrocytes (HC(50)=9.2 uM). This is VpAmp1.0 from Mesomexovis punctatus (Scorpion).